A 335-amino-acid chain; its full sequence is Mesoderm-specific transcript homolog protein (335 aa).

3 helical membrane-spanning segments follow: residues 13 to 33 (WWVQ…HIPP), 88 to 108 (IWEG…LGFG), and 266 to 286 (VGAL…LDPV). Residues 71–310 (IVVLLHGFPT…PRSTVSILDD (240 aa)) enclose the AB hydrolase-1 domain. The short motif at 98–103 (RVIALD) is the RVIALD element.

This sequence belongs to the AB hydrolase superfamily. In terms of tissue distribution, no detectable transcripts during preimplantation development. Isoform 1 was not detected in either in vitro-matured oocytes (IVF) or parthenogenetically activated (PA) blastocyst. Isoform 2 was expressed in IVF and PA blastocysts.

The protein resides in the endoplasmic reticulum membrane. The sequence is that of Mesoderm-specific transcript homolog protein (MEST) from Bos taurus (Bovine).